The primary structure comprises 390 residues: Transforming growth factor beta-1 proprotein (390 aa).

An N-terminal signal peptide occupies residues M1–G29. Positions L30–P74 are straightjacket domain. Residues E75–L271 are arm domain. 3 N-linked (GlcNAc...) asparagine glycosylation sites follow: N82, N136, and N176. Positions D226–G252 are bowtie tail. Positions R244 to D246 match the Cell attachment site motif. Intrachain disulfides connect C285–C294, C293–C356, C322–C387, and C326–C389.

The protein belongs to the TGF-beta family. Homodimer; disulfide-linked. Interacts with the serine proteases, HTRA1 and HTRA3: the interaction with either inhibits TGFB1-mediated signaling and the HTRA protease activity is required for this inhibition. May interact with THSD4; this interaction may lead to sequestration by FBN1 microfibril assembly and attenuation of TGFB signaling. Interacts with CD109, DPT and ASPN. Interacts with EFEMP2. Interacts with TSKU; the interaction contributes to regulation of the hair cycle. In terms of assembly, homodimer; disulfide-linked. Interacts with transforming growth factor beta-1 (TGF-beta-1) chain; interaction is non-covalent and maintains TGF-beta-1 in a latent state; each latency-associated peptide (LAP) monomer interacts with TGF-beta-1 in the other monomer. Interacts with LTBP1; leading to regulation of TGF-beta-1 activation. Interacts with LRRC32/GARP; leading to regulation of TGF-beta-1 activation on the surface of activated regulatory T-cells (Tregs). Interacts with LRRC33/NRROS; leading to regulation of TGF-beta-1 in macrophages and microglia. Interacts (via cell attachment site) with integrins ITGAV and ITGB6 (ITGAV:ITGB6), leading to release of the active TGF-beta-1. Interacts with NREP; the interaction results in a decrease in TGFB1 autoinduction. Interacts with HSP90AB1; inhibits latent TGFB1 activation. Interact with PSG9; leading to TGFB1 activation. Interacts with TGFBR3. As to quaternary structure, homodimer; disulfide-linked. Interacts with TGF-beta receptors (TGFBR1 and TGFBR2), leading to signal transduction. Post-translationally, transforming growth factor beta-1 proprotein: The precursor proprotein is cleaved in the Golgi apparatus by FURIN to form Transforming growth factor beta-1 (TGF-beta-1) and Latency-associated peptide (LAP) chains, which remain non-covalently linked, rendering TGF-beta-1 inactive. N-glycosylated. Deglycosylation leads to activation of Transforming growth factor beta-1 (TGF-beta-1); mechanisms triggering deglycosylation-driven activation of TGF-beta-1 are however unclear. In terms of tissue distribution, highly expressed in bone. Abundantly expressed in articular cartilage and chondrocytes and is increased in osteoarthritis (OA). Colocalizes with ASPN in chondrocytes within OA lesions of articular cartilage.

Its subcellular location is the secreted. The protein resides in the extracellular space. The protein localises to the extracellular matrix. Transforming growth factor beta-1 proprotein: Precursor of the Latency-associated peptide (LAP) and Transforming growth factor beta-1 (TGF-beta-1) chains, which constitute the regulatory and active subunit of TGF-beta-1, respectively. Functionally, required to maintain the Transforming growth factor beta-1 (TGF-beta-1) chain in a latent state during storage in extracellular matrix. Associates non-covalently with TGF-beta-1 and regulates its activation via interaction with 'milieu molecules', such as LTBP1, LRRC32/GARP and LRRC33/NRROS, that control activation of TGF-beta-1. Interaction with LRRC33/NRROS regulates activation of TGF-beta-1 in macrophages and microglia. Interaction with LRRC32/GARP controls activation of TGF-beta-1 on the surface of activated regulatory T-cells (Tregs). Interaction with integrins (ITGAV:ITGB6 or ITGAV:ITGB8) results in distortion of the Latency-associated peptide chain and subsequent release of the active TGF-beta-1. In terms of biological role, multifunctional protein that regulates the growth and differentiation of various cell types and is involved in various processes, such as normal development, immune function, microglia function and responses to neurodegeneration. Activation into mature form follows different steps: following cleavage of the proprotein in the Golgi apparatus, Latency-associated peptide (LAP) and Transforming growth factor beta-1 (TGF-beta-1) chains remain non-covalently linked rendering TGF-beta-1 inactive during storage in extracellular matrix. At the same time, LAP chain interacts with 'milieu molecules', such as LTBP1, LRRC32/GARP and LRRC33/NRROS that control activation of TGF-beta-1 and maintain it in a latent state during storage in extracellular milieus. TGF-beta-1 is released from LAP by integrins (ITGAV:ITGB6 or ITGAV:ITGB8): integrin-binding to LAP stabilizes an alternative conformation of the LAP bowtie tail and results in distortion of the LAP chain and subsequent release of the active TGF-beta-1. Once activated following release of LAP, TGF-beta-1 acts by binding to TGF-beta receptors (TGFBR1 and TGFBR2), which transduce signal. While expressed by many cells types, TGF-beta-1 only has a very localized range of action within cell environment thanks to fine regulation of its activation by Latency-associated peptide chain (LAP) and 'milieu molecules'. Plays an important role in bone remodeling: acts as a potent stimulator of osteoblastic bone formation, causing chemotaxis, proliferation and differentiation in committed osteoblasts. Can promote either T-helper 17 cells (Th17) or regulatory T-cells (Treg) lineage differentiation in a concentration-dependent manner. At high concentrations, leads to FOXP3-mediated suppression of RORC and down-regulation of IL-17 expression, favoring Treg cell development. At low concentrations in concert with IL-6 and IL-21, leads to expression of the IL-17 and IL-23 receptors, favoring differentiation to Th17 cells. Stimulates sustained production of collagen through the activation of CREB3L1 by regulated intramembrane proteolysis (RIP). Mediates SMAD2/3 activation by inducing its phosphorylation and subsequent translocation to the nucleus. Positively regulates odontoblastic differentiation in dental papilla cells, via promotion of IPO7-mediated translocation of phosphorylated SMAD2 to the nucleus and subsequent transcription of target genes. Can induce epithelial-to-mesenchymal transition (EMT) and cell migration in various cell types. This chain is Transforming growth factor beta-1 proprotein, found in Homo sapiens (Human).